A 312-amino-acid polypeptide reads, in one-letter code: MPRLSEPSPYVEFDRKQWRALRMSTPLALTEEELVGLRGLGEQIDLLEVEEVYLPLARLIHLQVAARQRLFAATAEFLGEPQQNPDRPVPFVIGVAGSVAVGKSTTARVLQALLARWDHHPRVDLVTTDGFLYPNAELDRRNLMHRKGFPESYNRRALMRFVTSVKSGSDYACAPVYSHLKYDIIPGAKHVVRHPDILILEGLNVLQTGPTLMVSDLFDFGIYVDARIEDIEQWYISRFLAMRSTAFADPESHFHHYAALNDTKAVAAAREIWRSINRPNLVENILPTRPRATLVLRKDADHSINRLRLRKL.

97–104 (GSVAVGKS) serves as a coordination point for ATP.

It belongs to the prokaryotic pantothenate kinase family.

It localises to the cytoplasm. It carries out the reaction (R)-pantothenate + ATP = (R)-4'-phosphopantothenate + ADP + H(+). The protein operates within cofactor biosynthesis; coenzyme A biosynthesis; CoA from (R)-pantothenate: step 1/5. The polypeptide is Pantothenate kinase (Mycolicibacterium paratuberculosis (strain ATCC BAA-968 / K-10) (Mycobacterium paratuberculosis)).